The chain runs to 506 residues: GTPase Der (506 aa).

2 consecutive EngA-type G domains span residues 3–166 (PVVA…GEQL) and 218–391 (IKIA…ACAT). GTP-binding positions include 9-16 (GRPNVGKS), 56-60 (DTGGI), 118-121 (NKTD), 224-231 (GRPNVGKS), 271-275 (DTAGV), and 336-339 (NKWD). A KH-like domain is found at 392–476 (QKTSTSMLTR…PIRIQFQEGN (85 aa)).

It belongs to the TRAFAC class TrmE-Era-EngA-EngB-Septin-like GTPase superfamily. EngA (Der) GTPase family. As to quaternary structure, associates with the 50S ribosomal subunit.

GTPase that plays an essential role in the late steps of ribosome biogenesis. This Actinobacillus pleuropneumoniae serotype 3 (strain JL03) protein is GTPase Der.